A 361-amino-acid polypeptide reads, in one-letter code: CRISPR system associated protein Cas8 (361 aa).

In terms of assembly, monomer. Can form a Cascade complex with Csa5, Cas7, Cas5a, Cas3 and Cas3'.

Functionally, CRISPR (clustered regularly interspaced short palindromic repeat) is an adaptive immune system that provides protection against mobile genetic elements (viruses, transposable elements and conjugative plasmids). CRISPR clusters contain sequences complementary to antecedent mobile elements and target invading nucleic acids. CRISPR clusters are transcribed and processed into CRISPR RNA (crRNA). This Thermoproteus tenax (strain ATCC 35583 / DSM 2078 / JCM 9277 / NBRC 100435 / Kra 1) protein is CRISPR system associated protein Cas8 (cas8a2).